A 96-amino-acid chain; its full sequence is Small ribosomal subunit protein bS18 (96 aa).

This sequence belongs to the bacterial ribosomal protein bS18 family. In terms of assembly, part of the 30S ribosomal subunit. Forms a tight heterodimer with protein bS6.

Functionally, binds as a heterodimer with protein bS6 to the central domain of the 16S rRNA, where it helps stabilize the platform of the 30S subunit. The polypeptide is Small ribosomal subunit protein bS18 (Borreliella burgdorferi (strain ATCC 35210 / DSM 4680 / CIP 102532 / B31) (Borrelia burgdorferi)).